The following is a 541-amino-acid chain: Tyrosine-protein kinase Yes (541 aa).

G2 carries N-myristoyl glycine lipidation. C3 carries the S-palmitoyl cysteine; in membrane form lipid modification. A Phosphotyrosine modification is found at Y32. Residues 89–150 (GGVTIFVALY…PSNYVVPADS (62 aa)) enclose the SH3 domain. Residues 156–253 (WYFGKMGRKD…GLCHKLTTVC (98 aa)) form the SH2 domain. The region spanning 275 to 528 (LRLEVKLGQG…YIQSFLEDYF (254 aa)) is the Protein kinase domain. ATP is bound by residues 281–289 (LGQGCFGEV) and K303. A phosphotyrosine mark is found at Y334 and Y343. D394 (proton acceptor) is an active-site residue. Phosphotyrosine; by autocatalysis is present on Y424. Y535 is subject to Phosphotyrosine.

This sequence belongs to the protein kinase superfamily. Tyr protein kinase family. SRC subfamily. As to quaternary structure, interacts with YAP1. Interacts with FASLG. Interacts with CTNND1; this interaction allows YES1-mediated activation of FYN and FER and subsequent phosphorylation of CTNND1. Interacts with CSF1R. Interacts with IL6ST/gp130. Interacts with SCRIB, when YES1 is in a closed conformation; the interaction facilitates YES1 autophosphorylation. In terms of processing, phosphorylated. Phosphorylation by CSK on the C-terminal tail maintains the enzyme in an inactive state. Autophosphorylation at Tyr-424 maintains enzyme activity by blocking CSK-mediated inhibition. Palmitoylation at Cys-3 promotes membrane localization.

It localises to the cell membrane. Its subcellular location is the cytoplasm. The protein resides in the cytoskeleton. The protein localises to the microtubule organizing center. It is found in the centrosome. It localises to the cytosol. Its subcellular location is the cell junction. The enzyme catalyses L-tyrosyl-[protein] + ATP = O-phospho-L-tyrosyl-[protein] + ADP + H(+). Its function is as follows. Non-receptor protein tyrosine kinase that is involved in the regulation of cell growth and survival, apoptosis, cell-cell adhesion, cytoskeleton remodeling, and differentiation. Stimulation by receptor tyrosine kinases (RTKs) including EGFR, PDGFR, CSF1R and FGFR leads to recruitment of YES1 to the phosphorylated receptor, and activation and phosphorylation of downstream substrates. Upon EGFR activation, promotes the phosphorylation of PARD3 to favor epithelial tight junction assembly. Participates in the phosphorylation of specific junctional components such as CTNND1 by stimulating the FYN and FER tyrosine kinases at cell-cell contacts. Upon T-cell stimulation by CXCL12, phosphorylates collapsin response mediator protein 2/DPYSL2 and induces T-cell migration. Participates in CD95L/FASLG signaling pathway and mediates AKT-mediated cell migration. Plays a role in cell cycle progression by phosphorylating the cyclin dependent kinase 4/CDK4 thus regulating the G1 phase. Also involved in G2/M progression and cytokinesis. Catalyzes phosphorylation of organic cation transporter OCT2 which induces its transport activity. The chain is Tyrosine-protein kinase Yes (Yes1) from Mus musculus (Mouse).